The chain runs to 171 residues: Dual specificity protein phosphatase OPG106 (171 aa).

The tract at residues methionine 1–methionine 27 is dimerization. One can recognise a Tyrosine-protein phosphatase domain in the interval serine 23 to asparagine 171. Cysteine 110 serves as the catalytic Phosphocysteine intermediate.

Belongs to the protein-tyrosine phosphatase family. Non-receptor class dual specificity subfamily. Homodimer.

The protein localises to the virion. It is found in the host cytoplasm. The enzyme catalyses O-phospho-L-tyrosyl-[protein] + H2O = L-tyrosyl-[protein] + phosphate. It carries out the reaction O-phospho-L-seryl-[protein] + H2O = L-seryl-[protein] + phosphate. Serine/tyrosine phosphatase which down-regulates cellular antiviral response by dephosphorylating activated host STAT1 and blocking interferon (IFN)-stimulated innate immune responses. Dephosphorylates the OPG144 protein. This is Dual specificity protein phosphatase OPG106 (OPG106) from Bos taurus (Bovine).